A 113-amino-acid chain; its full sequence is Iron-sulfur cluster insertion protein ErpA (113 aa).

Positions 41, 105, and 107 each coordinate iron-sulfur cluster.

The protein belongs to the HesB/IscA family. As to quaternary structure, homodimer. Iron-sulfur cluster is required as a cofactor.

Required for insertion of 4Fe-4S clusters for at least IspG. This Glaesserella parasuis serovar 5 (strain SH0165) (Haemophilus parasuis) protein is Iron-sulfur cluster insertion protein ErpA.